Consider the following 392-residue polypeptide: Phosphoglycerate kinase (392 aa).

Residues 21–23 (DFN), Arg36, 59–62 (HLGR), Arg117, and Arg150 contribute to the substrate site. Residues Lys200, Gly288, Glu319, and 345–348 (GGDS) contribute to the ATP site.

This sequence belongs to the phosphoglycerate kinase family. As to quaternary structure, monomer.

Its subcellular location is the cytoplasm. The enzyme catalyses (2R)-3-phosphoglycerate + ATP = (2R)-3-phospho-glyceroyl phosphate + ADP. It functions in the pathway carbohydrate degradation; glycolysis; pyruvate from D-glyceraldehyde 3-phosphate: step 2/5. The polypeptide is Phosphoglycerate kinase (Rubrobacter xylanophilus (strain DSM 9941 / JCM 11954 / NBRC 16129 / PRD-1)).